Reading from the N-terminus, the 339-residue chain is Phenylalanine--tRNA ligase alpha subunit (339 aa).

Position 254 (Glu-254) interacts with Mg(2+).

Belongs to the class-II aminoacyl-tRNA synthetase family. Phe-tRNA synthetase alpha subunit type 1 subfamily. As to quaternary structure, tetramer of two alpha and two beta subunits. Requires Mg(2+) as cofactor.

It is found in the cytoplasm. The enzyme catalyses tRNA(Phe) + L-phenylalanine + ATP = L-phenylalanyl-tRNA(Phe) + AMP + diphosphate + H(+). This is Phenylalanine--tRNA ligase alpha subunit from Dictyoglomus thermophilum (strain ATCC 35947 / DSM 3960 / H-6-12).